Here is a 119-residue protein sequence, read N- to C-terminus: Urotensin-2B (119 aa).

An N-terminal signal peptide occupies residues methionine 1–glycine 28. Residues arginine 29 to serine 109 constitute a propeptide that is removed on maturation. The cysteines at positions 113 and 118 are disulfide-linked.

The protein belongs to the urotensin-2 family.

Its subcellular location is the secreted. Functionally, potent vasoconstrictor. This Homo sapiens (Human) protein is Urotensin-2B (UTS2B).